The following is a 491-amino-acid chain: Acetyl-coenzyme A carboxylase carboxyl transferase subunit beta, chloroplastic (491 aa).

The disordered stretch occupies residues 26 to 49; the sequence is ARPRPIGNTNGSQDPSINDRDKNG. The segment covering 32–41 has biased composition (polar residues); that stretch reads GNTNGSQDPS. The 270-residue stretch at 222–491 folds into the CoA carboxyltransferase N-terminal domain; sequence LWVQCDNCYG…PLNHNSQVKR (270 aa). Residues C226, C229, C245, and C248 each coordinate Zn(2+). Residues 226–248 form a C4-type zinc finger; that stretch reads CDNCYGLNYKKIFSSKMNICEQC.

Belongs to the AccD/PCCB family. In terms of assembly, acetyl-CoA carboxylase is a heterohexamer composed of biotin carboxyl carrier protein, biotin carboxylase and 2 subunits each of ACCase subunit alpha and ACCase plastid-coded subunit beta (accD). It depends on Zn(2+) as a cofactor.

It localises to the plastid. The protein localises to the chloroplast stroma. It catalyses the reaction N(6)-carboxybiotinyl-L-lysyl-[protein] + acetyl-CoA = N(6)-biotinyl-L-lysyl-[protein] + malonyl-CoA. It participates in lipid metabolism; malonyl-CoA biosynthesis; malonyl-CoA from acetyl-CoA: step 1/1. Functionally, component of the acetyl coenzyme A carboxylase (ACC) complex. Biotin carboxylase (BC) catalyzes the carboxylation of biotin on its carrier protein (BCCP) and then the CO(2) group is transferred by the transcarboxylase to acetyl-CoA to form malonyl-CoA. The polypeptide is Acetyl-coenzyme A carboxylase carboxyl transferase subunit beta, chloroplastic (Ceratophyllum demersum (Rigid hornwort)).